We begin with the raw amino-acid sequence, 389 residues long: Cobalt-precorrin-5B C(1)-methyltransferase (389 aa).

Residues 1-25 (MESRADHAVPADEGHGATEPPRGRD) are disordered.

This sequence belongs to the CbiD family.

It carries out the reaction Co-precorrin-5B + S-adenosyl-L-methionine = Co-precorrin-6A + S-adenosyl-L-homocysteine. It functions in the pathway cofactor biosynthesis; adenosylcobalamin biosynthesis; cob(II)yrinate a,c-diamide from sirohydrochlorin (anaerobic route): step 6/10. Catalyzes the methylation of C-1 in cobalt-precorrin-5B to form cobalt-precorrin-6A. This Nitratidesulfovibrio vulgaris (strain ATCC 29579 / DSM 644 / CCUG 34227 / NCIMB 8303 / VKM B-1760 / Hildenborough) (Desulfovibrio vulgaris) protein is Cobalt-precorrin-5B C(1)-methyltransferase.